The primary structure comprises 428 residues: Glutamate-1-semialdehyde 2,1-aminomutase (428 aa).

Lys265 carries the post-translational modification N6-(pyridoxal phosphate)lysine.

This sequence belongs to the class-III pyridoxal-phosphate-dependent aminotransferase family. HemL subfamily. In terms of assembly, homodimer. Pyridoxal 5'-phosphate is required as a cofactor.

It is found in the cytoplasm. It catalyses the reaction (S)-4-amino-5-oxopentanoate = 5-aminolevulinate. It functions in the pathway porphyrin-containing compound metabolism; protoporphyrin-IX biosynthesis; 5-aminolevulinate from L-glutamyl-tRNA(Glu): step 2/2. The polypeptide is Glutamate-1-semialdehyde 2,1-aminomutase (Aeromonas salmonicida (strain A449)).